The primary structure comprises 493 residues: Ubiquitin carboxyl-terminal hydrolase 14 (493 aa).

In terms of domain architecture, Ubiquitin-like spans 4 to 80 (YSVTVKWGKE…MMGSADALPE (77 aa)). A Phosphothreonine modification is found at threonine 52. The USP domain occupies 105 to 482 (CGLTNLGNTC…IAYVLLYGPR (378 aa)). Cysteine 114 functions as the Nucleophile in the catalytic mechanism. 5 positions are modified to phosphoserine: serine 143, serine 148, serine 236, serine 301, and serine 431. Histidine 434 serves as the catalytic Proton acceptor. At lysine 448 the chain carries N6-acetyllysine.

Belongs to the peptidase C19 family. USP14/UBP6 subfamily. As to quaternary structure, homodimer (Potential). Associates with the 26S proteasome. Interacts with FANCC, CXCR4 and ERN1. Interacts with TRIM14; this interaction recruits USP14 to cleave ubiquitin chains of CGAS.

The protein resides in the cytoplasm. It is found in the cell membrane. It carries out the reaction Thiol-dependent hydrolysis of ester, thioester, amide, peptide and isopeptide bonds formed by the C-terminal Gly of ubiquitin (a 76-residue protein attached to proteins as an intracellular targeting signal).. In terms of biological role, proteasome-associated deubiquitinase which releases ubiquitin from the proteasome targeted ubiquitinated proteins. Ensures the regeneration of ubiquitin at the proteasome. Is a reversibly associated subunit of the proteasome and a large fraction of proteasome-free protein exists within the cell. Required for the degradation of the chemokine receptor CXCR4 which is critical for CXCL12-induced cell chemotaxis. Also serves as a physiological inhibitor of endoplasmic reticulum-associated degradation (ERAD) under the non-stressed condition by inhibiting the degradation of unfolded endoplasmic reticulum proteins via interaction with ERN1. Indispensable for synaptic development and function at neuromuscular junctions (NMJs). Plays a role in the innate immune defense against viruses by stabilizing the viral DNA sensor CGAS and thus inhibiting its autophagic degradation. In Oryctolagus cuniculus (Rabbit), this protein is Ubiquitin carboxyl-terminal hydrolase 14 (USP14).